The sequence spans 106 residues: Biogenesis of lysosome-related organelles complex 1 subunit 4 (106 aa).

Positions 53 to 106 form a coiled coil; the sequence is THSEGLSEQLKMTEKNILEMENLFDQIDQLCLFVQKAKSDLDKLEKLYNVVDRQ.

The protein belongs to the BLOC1S4 family. As to quaternary structure, component of the biogenesis of lysosome-related organelles complex-1 (BLOC-1) composed at least of blos-1, blos-2, blos-4, dsbn-1, glo-2, mutd-1 and snpn-1. Interacts with glo-2.

Component of the biogenesis of lysosome-related organelles complex-1 (BLOC-1) involved in gut granule biogenesis. The sequence is that of Biogenesis of lysosome-related organelles complex 1 subunit 4 (blos-4) from Caenorhabditis elegans.